Here is a 302-residue protein sequence, read N- to C-terminus: tRNA dimethylallyltransferase (302 aa).

9–16 (GPTGTGKS) serves as a coordination point for ATP. 11-16 (TGTGKS) contacts substrate.

The protein belongs to the IPP transferase family. Monomer. Mg(2+) is required as a cofactor.

The enzyme catalyses adenosine(37) in tRNA + dimethylallyl diphosphate = N(6)-dimethylallyladenosine(37) in tRNA + diphosphate. In terms of biological role, catalyzes the transfer of a dimethylallyl group onto the adenine at position 37 in tRNAs that read codons beginning with uridine, leading to the formation of N6-(dimethylallyl)adenosine (i(6)A). This is tRNA dimethylallyltransferase from Mycolicibacterium smegmatis (strain ATCC 700084 / mc(2)155) (Mycobacterium smegmatis).